The sequence spans 249 residues: Type III pantothenate kinase (249 aa).

6 to 13 (DAGNSRIK) provides a ligand contact to ATP. Substrate is bound by residues Phe77 and 98–101 (GVDR). The Proton acceptor role is filled by Asp100. Position 121 (Asp121) interacts with K(+). Ser124 is an ATP binding site. Residue Thr177 coordinates substrate.

The protein belongs to the type III pantothenate kinase family. In terms of assembly, homodimer. NH4(+) serves as cofactor. K(+) is required as a cofactor.

Its subcellular location is the cytoplasm. It catalyses the reaction (R)-pantothenate + ATP = (R)-4'-phosphopantothenate + ADP + H(+). The protein operates within cofactor biosynthesis; coenzyme A biosynthesis; CoA from (R)-pantothenate: step 1/5. Its function is as follows. Catalyzes the phosphorylation of pantothenate (Pan), the first step in CoA biosynthesis. This is Type III pantothenate kinase from Teredinibacter turnerae (strain ATCC 39867 / T7901).